Here is a 200-residue protein sequence, read N- to C-terminus: Recombination protein RecR (200 aa).

Residues 58–73 (CEVCHNLAEEGLCAIC) form a C4-type zinc finger. The Toprim domain occupies 81 to 176 (GLICVVEEPV…DISRLAYGMP (96 aa)).

It belongs to the RecR family.

May play a role in DNA repair. It seems to be involved in an RecBC-independent recombinational process of DNA repair. It may act with RecF and RecO. The protein is Recombination protein RecR of Magnetococcus marinus (strain ATCC BAA-1437 / JCM 17883 / MC-1).